The primary structure comprises 336 residues: Atypical chemokine receptor 1 (336 aa).

The Extracellular segment spans residues 1–63 (MGNCLHQAEL…CNLLDDSSLP (63 aa)). 2 N-linked (GlcNAc...) asparagine glycosylation sites follow: N16 and N33. Cystine bridges form between C51/C276 and C129/C195. A helical membrane pass occupies residues 64-84 (FFILASVLGILASSTVLFMLF). The Cytoplasmic segment spans residues 85 to 95 (RPLFRWQLCPG). The helical transmembrane segment at 96 to 116 (WPVLAQLAVGSALFSIVVPIL) threads the bilayer. Residues 117 to 129 (APGLGNTRSSALC) are Extracellular-facing. A helical membrane pass occupies residues 130-153 (SLGYCVWYGSAFAQALLLGCHASL). Residues 154 to 166 (GPKLGAGQVPGLT) lie on the Cytoplasmic side of the membrane. A helical membrane pass occupies residues 167 to 187 (LGLTVGLWGAAALLTVPITLA). Topologically, residues 188–207 (SGASDGLCTPIYSTELKALQ) are extracellular. A helical membrane pass occupies residues 208 to 228 (ATHTVACFAIFVLLPLGLFGA). The Cytoplasmic portion of the chain corresponds to 229–244 (KGVKKALGMGPGPWMT). A helical transmembrane segment spans residues 245-265 (ILWIWFIFWWPHGVVLGLDFL). At 266–287 (VRSKLLLLPTCLAQQVLDLLLN) the chain is on the extracellular side. A helical membrane pass occupies residues 288–308 (LAEALTIVHCVATPLLLALFC). The Cytoplasmic portion of the chain corresponds to 309–336 (HQATRTLLPSLPLPERWSSPVDTLGSKS).

This sequence belongs to the G-protein coupled receptor 1 family. Atypical chemokine receptor subfamily.

Its subcellular location is the early endosome. It is found in the recycling endosome. The protein resides in the membrane. In terms of biological role, atypical chemokine receptor that controls chemokine levels and localization via high-affinity chemokine binding that is uncoupled from classic ligand-driven signal transduction cascades, resulting instead in chemokine sequestration, degradation, or transcytosis. Also known as interceptor (internalizing receptor) or chemokine-scavenging receptor or chemokine decoy receptor. Has a promiscuous chemokine-binding profile, interacting with inflammatory chemokines of both the CXC and the CC subfamilies but not with homeostatic chemokines. Acts as a receptor for chemokines including CCL2, CCL5, CCL7, CCL11, CCL13, CCL14, CCL17, CXCL5, CXCL6, IL8/CXCL8, CXCL11, GRO, RANTES, MCP-1 and TARC. May regulate chemokine bioavailability and, consequently, leukocyte recruitment through two distinct mechanisms: when expressed in endothelial cells, it sustains the abluminal to luminal transcytosis of tissue-derived chemokines and their subsequent presentation to circulating leukocytes; when expressed in erythrocytes, serves as blood reservoir of cognate chemokines but also as a chemokine sink, buffering potential surges in plasma chemokine levels. This Sapajus apella (Brown-capped capuchin) protein is Atypical chemokine receptor 1 (ACKR1).